Here is a 275-residue protein sequence, read N- to C-terminus: Small ribosomal subunit protein uS2 (275 aa).

The disordered stretch occupies residues 232-256 (ARATDGKPEPEPVPGQELGADEPLA).

The protein belongs to the universal ribosomal protein uS2 family.

This Acidothermus cellulolyticus (strain ATCC 43068 / DSM 8971 / 11B) protein is Small ribosomal subunit protein uS2.